Reading from the N-terminus, the 286-residue chain is Deleted in azoospermia-like-B (286 aa).

Residues 33 to 114 (NTVFVGGIDI…PAIRKICTYV (82 aa)) form the RRM domain. The region spanning 155–180 (ACPYPSSPPMAIQQIPVGCQQPGYFQ) is the DAZ domain.

The protein belongs to the RRM DAZ family. As to quaternary structure, interacts with the C-terminus of pabp1 and with epabp. Prior to oocyte maturation, found in a complex with epabp and pum2 proteins and spdy1 mRNA; pum2 dissociates from the complex during maturation.

The protein resides in the cytoplasm. Its function is as follows. RNA-binding protein that is required for primordial germ cell (PGC) differentiation and indirectly necessary for the migration of PGCs through the endoderm. May promote meiotic cell division during spermatogenesis. Shows a preference for G- and U-rich RNAs and probably binds the 3'-UTR of target mRNAs. Stimulates the initiation of translation of mRNAs through the recruitment of poly(A)-binding proteins (PABPs). The protein is Deleted in azoospermia-like-B (dazl-b) of Xenopus laevis (African clawed frog).